Reading from the N-terminus, the 469-residue chain is Signal recognition particle 54 kDa protein (469 aa).

Residues 104 to 111, 184 to 188, and 242 to 245 contribute to the GTP site; these read GLYGSGKT, DTAGR, and TKLD. Disordered regions lie at residues 388-410 and 447-469; these read ELEN…SGKP and QQGG…PFGD. Residues 448–469 show a composition bias toward gly residues; that stretch reads QGGGGGGGMGGMGGGGMGPFGD.

Belongs to the GTP-binding SRP family. SRP54 subfamily. In terms of assembly, part of the signal recognition particle protein translocation system, which is composed of SRP and FtsY. Archaeal SRP consists of a 7S RNA molecule of 300 nucleotides and two protein subunits: SRP54 and SRP19.

It is found in the cytoplasm. The enzyme catalyses GTP + H2O = GDP + phosphate + H(+). Functionally, involved in targeting and insertion of nascent membrane proteins into the cytoplasmic membrane. Binds to the hydrophobic signal sequence of the ribosome-nascent chain (RNC) as it emerges from the ribosomes. The SRP-RNC complex is then targeted to the cytoplasmic membrane where it interacts with the SRP receptor FtsY. In Haloarcula marismortui (strain ATCC 43049 / DSM 3752 / JCM 8966 / VKM B-1809) (Halobacterium marismortui), this protein is Signal recognition particle 54 kDa protein.